The primary structure comprises 72 residues: Translation initiation factor IF-1 (72 aa).

An S1-like domain is found at 1-72 (MAKDDVIEID…DKGRITFRYK (72 aa)).

Belongs to the IF-1 family. In terms of assembly, component of the 30S ribosomal translation pre-initiation complex which assembles on the 30S ribosome in the order IF-2 and IF-3, IF-1 and N-formylmethionyl-tRNA(fMet); mRNA recruitment can occur at any time during PIC assembly.

It localises to the cytoplasm. In terms of biological role, one of the essential components for the initiation of protein synthesis. Stabilizes the binding of IF-2 and IF-3 on the 30S subunit to which N-formylmethionyl-tRNA(fMet) subsequently binds. Helps modulate mRNA selection, yielding the 30S pre-initiation complex (PIC). Upon addition of the 50S ribosomal subunit IF-1, IF-2 and IF-3 are released leaving the mature 70S translation initiation complex. The chain is Translation initiation factor IF-1 from Campylobacter jejuni subsp. doylei (strain ATCC BAA-1458 / RM4099 / 269.97).